A 282-amino-acid chain; its full sequence is Phosphatidylglycerol--prolipoprotein diacylglyceryl transferase (282 aa).

Transmembrane regions (helical) follow at residues 19 to 39 (IGPF…VFGW), 58 to 78 (ISLV…ILGG), and 104 to 124 (GGMS…WFAY). Position 149 (Arg-149) interacts with a 1,2-diacyl-sn-glycero-3-phospho-(1'-sn-glycerol). The next 3 membrane-spanning stretches (helical) occupy residues 190–210 (AGME…LGAL), 214–234 (GMIL…GEHF), and 250–270 (MGML…VLAI).

This sequence belongs to the Lgt family.

Its subcellular location is the cell inner membrane. The enzyme catalyses L-cysteinyl-[prolipoprotein] + a 1,2-diacyl-sn-glycero-3-phospho-(1'-sn-glycerol) = an S-1,2-diacyl-sn-glyceryl-L-cysteinyl-[prolipoprotein] + sn-glycerol 1-phosphate + H(+). It functions in the pathway protein modification; lipoprotein biosynthesis (diacylglyceryl transfer). Its function is as follows. Catalyzes the transfer of the diacylglyceryl group from phosphatidylglycerol to the sulfhydryl group of the N-terminal cysteine of a prolipoprotein, the first step in the formation of mature lipoproteins. The polypeptide is Phosphatidylglycerol--prolipoprotein diacylglyceryl transferase (Bradyrhizobium diazoefficiens (strain JCM 10833 / BCRC 13528 / IAM 13628 / NBRC 14792 / USDA 110)).